A 361-amino-acid chain; its full sequence is MTELPPNAPNPENATNELAQELLRKLRQKQGNWVEWGQAIASLQKSGYNPQDIFEATGFEPVQQNQVIVGSQVYNSLEKSGASAATLAHYATRGSDVLYELRLLTHEERAAAGDLTFTHKVDADEAREIAKAIKDFSRFRILPEGFSNHPGDAVAYQAWKLARQYSDLQERSRLIARGLRFAHSETARKQIEQLLVDFTVVSQRPAPIPPFFRFDTEDELPRIVPVVGQLPLKAEELKAVPLVEEIEPFRLVKFSGEQAWVALPGWQVLLAAEDPVTILATSDRFPKQNQTEPGPVLVVVDRSQREWNDFSYFVVDHDGELDFQWFETKPEFPILGKVIILVRPRRILDENVTKDSWQIDE.

An N-terminal alpha-helix region spans residues 16–197 (NELAQELLRK…RKQIEQLLVD (182 aa)). Residues 221–347 (PRIVPVVGQL…VIILVRPRRI (127 aa)) are C-terminal beta-sheet.

This sequence belongs to the RAF family. Homodimer. Forms an RbcL(8)-Raf1(8) complex. Each Raf1 dimer clamps the exterior of an RbcL dimer, protecting it. The extreme C-terminus (residues 354-361) inserts into the catalytic pocket of RbcL where the Glu-361 forms a salt bridge with 'Lys-202'. This insertion probably contributes to the assembly of RbcL(8). Forms complexes of many stoichiometries with RbcL with and without RbcS. RbcX and Raf1 can bind simultaneously to RbcL.

The protein localises to the cytoplasm. Its function is as follows. A major RuBisCO chaperone. Acts after GroEL-GroES chaperonin to fold and/or assemble the large subunit of RuBisCO (ccbL, rbcL). Cooperates with RbcX in RbcL folding, plays the major role in assembly of dimers into RbcL(8)-Raf1(8) intermediate complexes. RbcS replaces Raf1, leading to holoenzyme formation. Functionally, in vitro acts as an antagonist to CcmM35, suggesting it might regulate RuBisCO condensation and decondensation. The polypeptide is RuBisCO accumulation factor 1 (Nostoc sp. (strain PCC 7120 / SAG 25.82 / UTEX 2576)).